A 138-amino-acid polypeptide reads, in one-letter code: Basic phospholipase A2 canebraxin B (138 aa).

Positions Met-1–Gly-16 are cleaved as a signal peptide. Disulfide bonds link Cys-42–Cys-131, Cys-44–Cys-60, Cys-59–Cys-111, Cys-65–Cys-138, Cys-66–Cys-104, Cys-73–Cys-97, and Cys-91–Cys-102. Residues Tyr-43, Gly-45, and Gly-47 each coordinate Ca(2+). Residue His-63 is part of the active site. Residue Asp-64 participates in Ca(2+) binding. Asp-105 is an active-site residue.

The protein belongs to the phospholipase A2 family. Group II subfamily. Heterodimer of an acidic subunit and a basic chain. The acidic subunit is non-toxic, without enzymatic activity and comprises 3 peptides that are cross-linked by 7 disulfide bridges. The basic subunit is toxic, has phospholipase A2 activity and is composed of a single chain. Ca(2+) is required as a cofactor. In terms of tissue distribution, expressed by the venom gland.

It is found in the secreted. It carries out the reaction a 1,2-diacyl-sn-glycero-3-phosphocholine + H2O = a 1-acyl-sn-glycero-3-phosphocholine + a fatty acid + H(+). In terms of biological role, snake venom phospholipase A2 (PLA2) that shows presynaptic neurotoxicity. PLA2 catalyzes the calcium-dependent hydrolysis of the 2-acyl groups in 3-sn-phosphoglycerides. The sequence is that of Basic phospholipase A2 canebraxin B from Crotalus horridus (Timber rattlesnake).